Here is a 99-residue protein sequence, read N- to C-terminus: Small integral membrane protein 14 (99 aa).

Over Met1–Asn49 the chain is Lumenal. A helical membrane pass occupies residues Gly50 to Leu70. The Cytoplasmic segment spans residues Arg71–Asp99. A disordered region spans residues Gly77–Asp99.

The protein resides in the endoplasmic reticulum membrane. The chain is Small integral membrane protein 14 (SMIM14) from Pongo abelii (Sumatran orangutan).